We begin with the raw amino-acid sequence, 522 residues long: MNPQLASTILYCLFFFFLGIAAVLAFIQRQAVKRRERLDAEAEAVLESARREAETRGNQIIVDAREKALAIKAEADREVAAMRETEQIRDRKLDAREDQLASGQESLRKAQRGLESSQTRLAAQMRNLTEQRAELDRLVQESQRALEKVSGMTQEEAAEKLMQSLRQDLEHEIGSTVLKHQRELGRRVDAQAREMLLTAMQRYASVHTADTTTSTVGVPTDDMKGRIIGREGRNIRAFEKATGVDLIIDDTPGVVVVSGFDPVRREVARMSLEKLIADGRIHPSKIEETVEQAGKEIQAFILQKGQEAAGEVNVSGLHDRVIEMLGRLHFRTSYSQNVLRHSVEVAFLAGMMAEMIGLDGDLARRCGLLHDIGKAADHELEGGHPKIGADLLRRSKENDEVVHAAKGHHDEIVTEFPYTMLVATADACSASRPGARRESLERYVKRMEELESIAQRFDGVQQAYAISAGRELRVMVGSQQVSDERAAAICRDIASTFEKELTYPGEIKVTVVREARFTNTAK.

A helical transmembrane segment spans residues 7 to 27 (STILYCLFFFFLGIAAVLAFI). One can recognise a KH domain in the interval 212–272 (TTSTVGVPTD…VRREVARMSL (61 aa)). The HD domain maps to 338 to 431 (VLRHSVEVAF…VATADACSAS (94 aa)).

This sequence belongs to the RNase Y family.

The protein localises to the cell membrane. Endoribonuclease that initiates mRNA decay. The sequence is that of Ribonuclease Y from Rhodopirellula baltica (strain DSM 10527 / NCIMB 13988 / SH1).